We begin with the raw amino-acid sequence, 250 residues long: UPF0758 protein tlr1707 (250 aa).

Positions 116–239 constitute an MPN domain; that stretch reads TIIDSPALAA…YQSLREITPL (124 aa). Zn(2+)-binding residues include His-188, His-190, and Asp-201. Positions 188 to 201 match the JAMM motif motif; sequence HNHPSGNLSPSQAD.

The protein belongs to the UPF0758 family.

The sequence is that of UPF0758 protein tlr1707 from Thermosynechococcus vestitus (strain NIES-2133 / IAM M-273 / BP-1).